Consider the following 585-residue polypeptide: Nitrogen permease regulator 3-like protein (585 aa).

Residues 117–157 (GEWAKRRKPRTTVESNASSSHLVSKPESSHPSTGSFEVKSS) form a disordered region. Residues 128-138 (TVESNASSSHL) are compositionally biased toward polar residues. Positions 148–157 (STGSFEVKSS) are enriched in low complexity.

It belongs to the NPR3 family.

This chain is Nitrogen permease regulator 3-like protein, found in Schizosaccharomyces pombe (strain 972 / ATCC 24843) (Fission yeast).